A 409-amino-acid chain; its full sequence is Probable ATP-dependent RNA helicase MG308 homolog (409 aa).

Positions 26-179 (VFKVWPRQNV…RKQVAPLTVV (154 aa)) constitute a Helicase ATP-binding domain. 39–46 (AETGSGKT) serves as a coordination point for ATP. The short motif at 126–129 (DEVD) is the DEVD box element. The region spanning 190 to 349 (LVKHFLLNLN…SVHLERDGTL (160 aa)) is the Helicase C-terminal domain.

Belongs to the DEAD box helicase family.

The enzyme catalyses ATP + H2O = ADP + phosphate + H(+). The sequence is that of Probable ATP-dependent RNA helicase MG308 homolog from Mycoplasma pneumoniae (strain ATCC 29342 / M129 / Subtype 1) (Mycoplasmoides pneumoniae).